A 608-amino-acid polypeptide reads, in one-letter code: Chaperone protein HtpG (608 aa).

Residues 1–332 are a; substrate-binding; that stretch reads MQFQTEVNQL…VEDLPLNVSR (332 aa). Residues 333-536 are b; it reads EILQENQILK…KNKPDFAMQQ (204 aa). Residues 537–608 form a c region; that stretch reads LLKQMGQEQN…LTKIINKAFS (72 aa).

Belongs to the heat shock protein 90 family. In terms of assembly, homodimer.

It is found in the cytoplasm. Functionally, molecular chaperone. Has ATPase activity. In Campylobacter jejuni subsp. jejuni serotype O:6 (strain 81116 / NCTC 11828), this protein is Chaperone protein HtpG.